The sequence spans 397 residues: ATP-dependent RNA helicase eIF4A (397 aa).

The short motif at 24-52 (DSFDEMNLKPELLRGIYAYGFERPSAIQQ) is the Q motif element. Positions 55-225 (IMPVIKGHDV…TKFMREPVRI (171 aa)) constitute a Helicase ATP-binding domain. 68–75 (AQSGTGKT) serves as a coordination point for ATP. The short motif at 173–176 (DEAD) is the DEAD box element. The region spanning 236 to 397 (GIKQFYIAVE…EMPMNVADLI (162 aa)) is the Helicase C-terminal domain.

It belongs to the DEAD box helicase family. eIF4A subfamily. As to quaternary structure, component of the eIF4F complex, which composition varies with external and internal environmental conditions. It is composed of at least eIF4A, eIF4E and eIF4G.

Its subcellular location is the cytoplasm. It catalyses the reaction ATP + H2O = ADP + phosphate + H(+). Functionally, ATP-dependent RNA helicase which is a subunit of the eIF4F complex involved in cap recognition and is required for mRNA binding to ribosome. In the current model of translation initiation, eIF4A unwinds RNA secondary structures in the 5'-UTR of mRNAs which is necessary to allow efficient binding of the small ribosomal subunit, and subsequent scanning for the initiator codon. This Neurospora crassa (strain ATCC 24698 / 74-OR23-1A / CBS 708.71 / DSM 1257 / FGSC 987) protein is ATP-dependent RNA helicase eIF4A (tif-1).